A 243-amino-acid chain; its full sequence is Ubiquinone/menaquinone biosynthesis C-methyltransferase UbiE (243 aa).

S-adenosyl-L-methionine contacts are provided by residues Thr-69, Asp-90, and 116-117 (DA).

This sequence belongs to the class I-like SAM-binding methyltransferase superfamily. MenG/UbiE family.

The enzyme catalyses a 2-demethylmenaquinol + S-adenosyl-L-methionine = a menaquinol + S-adenosyl-L-homocysteine + H(+). It catalyses the reaction a 2-methoxy-6-(all-trans-polyprenyl)benzene-1,4-diol + S-adenosyl-L-methionine = a 5-methoxy-2-methyl-3-(all-trans-polyprenyl)benzene-1,4-diol + S-adenosyl-L-homocysteine + H(+). Its pathway is quinol/quinone metabolism; menaquinone biosynthesis; menaquinol from 1,4-dihydroxy-2-naphthoate: step 2/2. It participates in cofactor biosynthesis; ubiquinone biosynthesis. Methyltransferase required for the conversion of demethylmenaquinol (DMKH2) to menaquinol (MKH2) and the conversion of 2-polyprenyl-6-methoxy-1,4-benzoquinol (DDMQH2) to 2-polyprenyl-3-methyl-6-methoxy-1,4-benzoquinol (DMQH2). The chain is Ubiquinone/menaquinone biosynthesis C-methyltransferase UbiE from Burkholderia cenocepacia (strain ATCC BAA-245 / DSM 16553 / LMG 16656 / NCTC 13227 / J2315 / CF5610) (Burkholderia cepacia (strain J2315)).